The primary structure comprises 129 residues: uncharacterized protein (129 aa).

3 helical membrane-spanning segments follow: residues 15–35 (IFII…IFVF), 48–68 (IFSF…YYFF), and 107–127 (INIF…NLVC).

It localises to the membrane. This is an uncharacterized protein from Saccharomyces cerevisiae (strain ATCC 204508 / S288c) (Baker's yeast).